The following is a 306-amino-acid chain: Ribonuclease H2 subunit B (306 aa).

Residues 232 to 285 (LPDLSSPTPEPPVKKRRVSDAPVEADEDYTKYNSDNKSRKSNSKMTAAQKSLAK) form a disordered region. Basic and acidic residues predominate over residues 259 to 269 (DYTKYNSDNKS).

This sequence belongs to the RNase H2 subunit B family. As to quaternary structure, the RNase H2 complex is a heterotrimer composed of the catalytic subunit RNASEH2A and the non-catalytic subunits RNASEH2B and RNASEH2C.

The protein resides in the nucleus. In terms of biological role, non catalytic subunit of RNase H2, an endonuclease that specifically degrades the RNA of RNA:DNA hybrids. Participates in DNA replication, possibly by mediating the removal of lagging-strand Okazaki fragment RNA primers during DNA replication. Mediates the excision of single ribonucleotides from DNA:RNA duplexes. The protein is Ribonuclease H2 subunit B (rnaseh2b) of Xenopus laevis (African clawed frog).